The following is a 141-amino-acid chain: Granulocyte-macrophage colony-stimulating factor (141 aa).

A signal peptide spans 1 to 17 (MWLQNLLFLGIVVYSLS). Serine 22 carries an O-linked (GalNAc...) serine glycan. Threonine 27 is a glycosylation site (O-linked (GalNAc...) threonine). Cystine bridges form between cysteine 68-cysteine 110 and cysteine 102-cysteine 135. Asparagine 83 and asparagine 92 each carry an N-linked (GlcNAc...) asparagine glycan.

This sequence belongs to the GM-CSF family. In terms of assembly, monomer. The signaling GM-CSF receptor complex is a dodecamer of two head-to-head hexamers of two alpha, two beta, and two ligand subunits.

It is found in the secreted. Functionally, cytokine that stimulates the growth and differentiation of hematopoietic precursor cells from various lineages, including granulocytes, macrophages, eosinophils and erythrocytes. The sequence is that of Granulocyte-macrophage colony-stimulating factor (Csf2) from Mus musculus (Mouse).